The sequence spans 203 residues: RNA pyrophosphohydrolase (203 aa).

One can recognise a Nudix hydrolase domain in the interval 6–149 (GFRPNVGIIL…KRNVYQMALT (144 aa)). The Nudix box signature appears at 38–59 (GGIKHGESPEQAMFRELHEEVG). The segment at 170–203 (RAHRRDEGSEHNDHLDPTGPHDAGASVSEPKQAE) is disordered. Residues 173–185 (RRDEGSEHNDHLD) are compositionally biased toward basic and acidic residues.

Belongs to the Nudix hydrolase family. RppH subfamily. A divalent metal cation is required as a cofactor.

Functionally, accelerates the degradation of transcripts by removing pyrophosphate from the 5'-end of triphosphorylated RNA, leading to a more labile monophosphorylated state that can stimulate subsequent ribonuclease cleavage. In Leptothrix cholodnii (strain ATCC 51168 / LMG 8142 / SP-6) (Leptothrix discophora (strain SP-6)), this protein is RNA pyrophosphohydrolase.